The sequence spans 290 residues: Acetyl-coenzyme A carboxylase carboxyl transferase subunit beta (290 aa).

The CoA carboxyltransferase N-terminal domain occupies 28-290; that stretch reads VMTKCPQCKK…KGGEEGWWRN (263 aa). Zn(2+) is bound by residues Cys32, Cys35, Cys51, and Cys54. Residues 32-54 form a C4-type zinc finger; sequence CPQCKKIMYTKELIKNLRVCLSC.

The protein belongs to the AccD/PCCB family. Acetyl-CoA carboxylase is a heterohexamer composed of biotin carboxyl carrier protein (AccB), biotin carboxylase (AccC) and two subunits each of ACCase subunit alpha (AccA) and ACCase subunit beta (AccD). Zn(2+) serves as cofactor.

It localises to the cytoplasm. The enzyme catalyses N(6)-carboxybiotinyl-L-lysyl-[protein] + acetyl-CoA = N(6)-biotinyl-L-lysyl-[protein] + malonyl-CoA. The protein operates within lipid metabolism; malonyl-CoA biosynthesis; malonyl-CoA from acetyl-CoA: step 1/1. Its function is as follows. Component of the acetyl coenzyme A carboxylase (ACC) complex. Biotin carboxylase (BC) catalyzes the carboxylation of biotin on its carrier protein (BCCP) and then the CO(2) group is transferred by the transcarboxylase to acetyl-CoA to form malonyl-CoA. This chain is Acetyl-coenzyme A carboxylase carboxyl transferase subunit beta, found in Geobacillus kaustophilus (strain HTA426).